A 197-amino-acid chain; its full sequence is Dermorphin-1 (197 aa).

The N-terminal stretch at 1–20 (MSFLKKSLLLILFLGLVSLS) is a signal peptide. The propeptide occupies 21 to 45 (VCKEEKRETEEENENEENHEEGSEM). The interval 24–197 (EEKRETEEEN…GYPSGEAKKM (174 aa)) is disordered. Over residues 30–39 (EEENENEENH) the composition is skewed to acidic residues. Positions 40–62 (EEGSEMKRYMFHLMDGEAKKRDS) are enriched in basic and acidic residues. The residue at position 49 (methionine 49) is a D-methionine. Aspartate 54 carries the post-translational modification Aspartic acid 1-amide. Positions 56-77 (EAKKRDSEENEIEENHEEGSEM) are excised as a propeptide. The residue at position 81 (alanine 81) is a D-alanine (Ala). Serine 86 carries the serine amide modification. Residues 88–97 (EAKKIKRVSE) show a composition bias toward basic and acidic residues. Residues 88–112 (EAKKIKRVSEEENENEENHEEGSEM) constitute a propeptide that is removed on maturation. Alanine 116 bears the D-alanine (Ala) mark. Residue serine 121 is modified to Serine amide. Positions 123 to 132 (EAKKIKRESE) are enriched in basic and acidic residues. Positions 123-147 (EAKKIKRESEEEKEIEENHEEGSEM) are excised as a propeptide. Residue alanine 151 is modified to D-alanine (Ala). Position 156 is a serine amide (serine 156). The propeptide occupies 158 to 182 (EAKKIKRESEEENENEENHEEGSEM). The span at 167-176 (EEENENEENH) shows a compositional bias: acidic residues. Alanine 186 carries the D-alanine (Ala) modification. Serine 191 is modified (serine amide). A propeptide spanning residues 193-197 (EAKKM) is cleaved from the precursor.

This sequence belongs to the frog skin active peptide (FSAP) family. Dermorphin subfamily. Expressed by the skin glands.

Its subcellular location is the secreted. In terms of biological role, dermorphin has a very potent opiate-like activity. It has high affinity and selectivity for mu-type opioid receptors. Deltorphin has a very potent opiate-like activity. It has high affinity and selectivity for delta-type opioid receptors. This Phyllomedusa sauvagei (Sauvage's leaf frog) protein is Dermorphin-1.